Here is a 175-residue protein sequence, read N- to C-terminus: DM domain-containing protein mab-23 (175 aa).

Positions 8–56 (CQLCANHGIFNQPKKGHKQKCPYRTCPCSLCALNTKRRALDQIERQLKH) form a DNA-binding region, DM. The interval 58 to 93 (NEPMTGQTATSMASPTPECPLSPTTPKMTPHTPTSG) is disordered. The segment covering 59–71 (EPMTGQTATSMAS) has biased composition (polar residues). Over residues 81–91 (TTPKMTPHTPT) the composition is skewed to low complexity.

In terms of tissue distribution, expressed in a limited number of non-sex-specific tissues in males, including 6-8 unidentified neurons of the head, ventral body wall muscle, and the PHCL/R neurons.

The protein localises to the nucleus. Its function is as follows. Probable transcription factor that plays a role in the development of the dopaminergic neurons of the male-specific genital sensilla (simple sense organs) known as rays, by negatively regulating the activity of the transcription factor ast-1. Involved in male mating behavior, probably as a result of a role in the differentiation of male-specific diagonal muscles. Required for development of the male proctodeum. May be dispensable in hermaphrodites. This chain is DM domain-containing protein mab-23, found in Caenorhabditis elegans.